Reading from the N-terminus, the 386-residue chain is GLABROUS1 enhancer-binding protein-like 1 (386 aa).

2 disordered regions span residues 1–58 (MVTP…KKKK) and 197–314 (ESGE…DDDD). The span at 216-226 (EEIRDNDETAR) shows a compositional bias: basic and acidic residues. A coiled-coil region spans residues 221–285 (NDETARKAQQ…LKEHEEVANT (65 aa)). Residues 257–267 (DNNGTTQIAQQ) show a composition bias toward polar residues. The span at 291–300 (NGAAKTTENG) shows a compositional bias: low complexity. Residues 354–375 (LSDEWKALCVEERRLNIKKLRF) are non-canonical leucine-zipper.

This sequence belongs to the GeBP family. In terms of assembly, homo- and heterodimers. Interacts with GEBP, GPL2 and GPL3. Interacts with GEBP. Expressed in the apical meristem and young leaf primordia. Detected in the vascular tissues of cotyledons and leaves, in hydathodes and at the base of flowers and siliques, but not in roots.

It is found in the nucleus. Functionally, probable transcription factor. May play redundant roles with GEBP and GPL2 in cytokinin responses by regulating the transcript levels of type-A ARR response genes. Involved in stress responses. Plays a repressive role in cell expansion by counteracting the positive role of CPR5 in this process, but does not regulate cell proliferation or endoreduplication. The chain is GLABROUS1 enhancer-binding protein-like 1 from Arabidopsis thaliana (Mouse-ear cress).